We begin with the raw amino-acid sequence, 155 residues long: Large ribosomal subunit protein uL30 (155 aa).

Belongs to the universal ribosomal protein uL30 family. In terms of assembly, part of the 50S ribosomal subunit.

In Pyrococcus abyssi (strain GE5 / Orsay), this protein is Large ribosomal subunit protein uL30.